The following is a 418-amino-acid chain: Serpin A9 (418 aa).

The signal sequence occupies residues 1–25 (MGSSSFYRVLLLVGFCAPIFCMLSS). Asn-103, Asn-213, and Asn-224 each carry an N-linked (GlcNAc...) asparagine glycan.

The protein belongs to the serpin family.

The protein resides in the secreted. This chain is Serpin A9 (Serpina9), found in Mus musculus (Mouse).